The following is a 343-amino-acid chain: Arginine N-succinyltransferase (343 aa).

Leu125 contributes to the succinyl-CoA binding site. Catalysis depends on His229, which acts as the Proton donor.

This sequence belongs to the arginine N-succinyltransferase family.

The catalysed reaction is succinyl-CoA + L-arginine = N(2)-succinyl-L-arginine + CoA + H(+). The protein operates within amino-acid degradation; L-arginine degradation via AST pathway; L-glutamate and succinate from L-arginine: step 1/5. In terms of biological role, catalyzes the transfer of succinyl-CoA to arginine to produce N(2)-succinylarginine. This Photorhabdus laumondii subsp. laumondii (strain DSM 15139 / CIP 105565 / TT01) (Photorhabdus luminescens subsp. laumondii) protein is Arginine N-succinyltransferase.